The chain runs to 272 residues: Ribosomal RNA small subunit methyltransferase A (272 aa).

S-adenosyl-L-methionine is bound by residues asparagine 20, leucine 22, glycine 47, glutamate 68, aspartate 93, and asparagine 114.

It belongs to the class I-like SAM-binding methyltransferase superfamily. rRNA adenine N(6)-methyltransferase family. RsmA subfamily.

It localises to the cytoplasm. The catalysed reaction is adenosine(1518)/adenosine(1519) in 16S rRNA + 4 S-adenosyl-L-methionine = N(6)-dimethyladenosine(1518)/N(6)-dimethyladenosine(1519) in 16S rRNA + 4 S-adenosyl-L-homocysteine + 4 H(+). Its function is as follows. Specifically dimethylates two adjacent adenosines (A1518 and A1519) in the loop of a conserved hairpin near the 3'-end of 16S rRNA in the 30S particle. May play a critical role in biogenesis of 30S subunits. The chain is Ribosomal RNA small subunit methyltransferase A from Aliivibrio fischeri (strain ATCC 700601 / ES114) (Vibrio fischeri).